The primary structure comprises 473 residues: H(+)/Cl(-) exchange transporter ClcA (473 aa).

The Cytoplasmic portion of the chain corresponds to Met-1–Pro-32. Residues Leu-33–Val-69 form a helical membrane-spanning segment. Residues His-70–Pro-76 are Periplasmic-facing. The helical transmembrane segment at Leu-77 to Tyr-100 threads the bilayer. The Selectivity filter part_1 signature appears at Gly-106 to Pro-110. A chloride-binding site is contributed by Ser-107. Positions Ile-109–Leu-116 form an intramembrane region, helical. Over Glu-117 to Arg-123 the chain is Cytoplasmic. Transmembrane regions (helical) follow at residues Trp-124 to Gly-141 and Glu-148 to Phe-166. Positions Gly-146 to Pro-150 match the Selectivity filter part_2 motif. Residues Arg-167–Thr-176 are Cytoplasmic-facing. 2 consecutive intramembrane regions (helical) follow at residues Leu-177 to Ala-189 and Pro-193 to Ile-201. Over Glu-202–Ser-214 the chain is Cytoplasmic. Residues Ile-215–Phe-232 traverse the membrane as a helical segment. Topologically, residues Asn-233–Leu-252 are periplasmic. The chain crosses the membrane as a helical span at residues Trp-253 to His-281. Topologically, residues Arg-282–Asn-287 are cytoplasmic. A helical transmembrane segment spans residues Ile-288–Ala-309. Residues Pro-310 to Ser-329 are Periplasmic-facing. Transmembrane regions (helical) follow at residues Met-330–Ser-349 and Gly-355–Val-376. Positions Gly-355–Pro-359 match the Selectivity filter part_3 motif. 2 residues coordinate chloride: Ile-356 and Phe-357. Topologically, residues Glu-377–Ala-386 are periplasmic. Residues Gly-387 to Ser-401 constitute an intramembrane region (helical). The segment at residues Ile-402 to Ala-404 is an intramembrane region (note=Loop between two helices). An intramembrane region (helical) is located at residues Pro-405–Thr-416. Residues Asp-417–Leu-421 constitute an intramembrane region (note=Loop between two helices). A helical transmembrane segment spans residues Ile-422 to Phe-438. The Cytoplasmic segment spans residues Thr-439–Thr-473. Chloride is bound at residue Tyr-445.

The protein belongs to the chloride channel (TC 2.A.49) family. ClcA subfamily. In terms of assembly, homodimer.

It localises to the cell inner membrane. It catalyses the reaction 2 chloride(in) + H(+)(out) = 2 chloride(out) + H(+)(in). Its function is as follows. Proton-coupled chloride transporter. Functions as antiport system and exchanges two chloride ions for 1 proton. Probably acts as an electrical shunt for an outwardly-directed proton pump that is linked to amino acid decarboxylation, as part of the extreme acid resistance (XAR) response. The sequence is that of H(+)/Cl(-) exchange transporter ClcA from Escherichia coli O9:H4 (strain HS).